The chain runs to 130 residues: Small ribosomal subunit protein uS9 (130 aa).

The protein belongs to the universal ribosomal protein uS9 family.

The protein is Small ribosomal subunit protein uS9 of Methylibium petroleiphilum (strain ATCC BAA-1232 / LMG 22953 / PM1).